A 196-amino-acid polypeptide reads, in one-letter code: Putative NADH dehydrogenase/NAD(P)H nitroreductase Pnuc_0932 (196 aa).

This sequence belongs to the nitroreductase family. HadB/RutE subfamily. The cofactor is FMN.

This Polynucleobacter asymbioticus (strain DSM 18221 / CIP 109841 / QLW-P1DMWA-1) (Polynucleobacter necessarius subsp. asymbioticus) protein is Putative NADH dehydrogenase/NAD(P)H nitroreductase Pnuc_0932.